The primary structure comprises 137 residues: Fluoride-specific ion channel FluC 1 (137 aa).

4 helical membrane passes run 4–24 (LIYIMVGIAGILGALSRYYLG), 37–57 (LATLLINLAGCFLLAWLTTYI), 67–87 (VITGIGTGFIGSFTTFSTFSV), and 98–118 (WGIAFLYVSCSILGGLIMSGL). Residues G77 and T80 each contribute to the Na(+) site.

It belongs to the fluoride channel Fluc/FEX (TC 1.A.43) family.

The protein resides in the cell membrane. It catalyses the reaction fluoride(in) = fluoride(out). With respect to regulation, na(+) is not transported, but it plays an essential structural role and its presence is essential for fluoride channel function. Functionally, fluoride-specific ion channel. Important for reducing fluoride concentration in the cell, thus reducing its toxicity. The sequence is that of Fluoride-specific ion channel FluC 1 from Bacillus cereus (strain ZK / E33L).